Consider the following 687-residue polypeptide: DNA ligase (687 aa).

NAD(+) contacts are provided by residues 34-38 (DAEYD), 83-84 (SL), and Glu-117. Lys-119 serves as the catalytic N6-AMP-lysine intermediate. Residues Arg-140, Glu-182, Lys-298, and Lys-322 each coordinate NAD(+). Zn(2+)-binding residues include Cys-416, Cys-419, Cys-434, and Cys-439. The 79-residue stretch at 609–687 (EARGPFAGKT…EEEFVRLLKE (79 aa)) folds into the BRCT domain.

The protein belongs to the NAD-dependent DNA ligase family. LigA subfamily. It depends on Mg(2+) as a cofactor. Requires Mn(2+) as cofactor.

The enzyme catalyses NAD(+) + (deoxyribonucleotide)n-3'-hydroxyl + 5'-phospho-(deoxyribonucleotide)m = (deoxyribonucleotide)n+m + AMP + beta-nicotinamide D-nucleotide.. In terms of biological role, DNA ligase that catalyzes the formation of phosphodiester linkages between 5'-phosphoryl and 3'-hydroxyl groups in double-stranded DNA using NAD as a coenzyme and as the energy source for the reaction. It is essential for DNA replication and repair of damaged DNA. The polypeptide is DNA ligase (Anaeromyxobacter dehalogenans (strain 2CP-1 / ATCC BAA-258)).